The chain runs to 544 residues: T-complex protein 1 subunit gamma (544 aa).

The cysteines at positions 368 and 374 are disulfide-linked. The segment at 525 to 544 is disordered; it reads SKKRGGNEPTNPAAMAQGQE.

Belongs to the TCP-1 chaperonin family. Heterooligomeric complex of about 850 to 900 kDa that forms two stacked rings, 12 to 16 nm in diameter.

Its subcellular location is the cytoplasm. Its function is as follows. Molecular chaperone; assists the folding of proteins upon ATP hydrolysis. Known to play a role, in vitro, in the folding of actin and tubulin. The protein is T-complex protein 1 subunit gamma of Drosophila melanogaster (Fruit fly).